The following is a 97-amino-acid chain: Co-chaperonin GroES (97 aa).

It belongs to the GroES chaperonin family. As to quaternary structure, heptamer of 7 subunits arranged in a ring. Interacts with the chaperonin GroEL.

The protein localises to the cytoplasm. Together with the chaperonin GroEL, plays an essential role in assisting protein folding. The GroEL-GroES system forms a nano-cage that allows encapsulation of the non-native substrate proteins and provides a physical environment optimized to promote and accelerate protein folding. GroES binds to the apical surface of the GroEL ring, thereby capping the opening of the GroEL channel. In Serratia proteamaculans (strain 568), this protein is Co-chaperonin GroES.